The primary structure comprises 148 residues: UPF0756 membrane protein YeaL (148 aa).

4 helical membrane passes run 14 to 34 (ALGF…LIIV), 51 to 71 (LSIG…SGTL), 86 to 106 (LVAI…VTLM), and 121 to 141 (VLGV…AGLV).

The protein belongs to the UPF0756 family.

It is found in the cell membrane. In Shigella dysenteriae serotype 1 (strain Sd197), this protein is UPF0756 membrane protein YeaL.